The following is a 282-amino-acid chain: Pantothenate synthetase (282 aa).

Position 30–37 (30–37) interacts with ATP; the sequence is MGYLHEGH. His-37 acts as the Proton donor in catalysis. Gln-61 serves as a coordination point for (R)-pantoate. Gln-61 is a beta-alanine binding site. Residue 147–150 coordinates ATP; it reads GMKD. Gln-153 lines the (R)-pantoate pocket. Residues Val-176 and 184–187 each bind ATP; that span reads KSSR.

Belongs to the pantothenate synthetase family. Homodimer.

Its subcellular location is the cytoplasm. The enzyme catalyses (R)-pantoate + beta-alanine + ATP = (R)-pantothenate + AMP + diphosphate + H(+). It functions in the pathway cofactor biosynthesis; (R)-pantothenate biosynthesis; (R)-pantothenate from (R)-pantoate and beta-alanine: step 1/1. In terms of biological role, catalyzes the condensation of pantoate with beta-alanine in an ATP-dependent reaction via a pantoyl-adenylate intermediate. This is Pantothenate synthetase from Bacillus anthracis (strain A0248).